The chain runs to 250 residues: Ribosomal RNA small subunit methyltransferase J (250 aa).

Residues 96–97 and Asp-168 each bind S-adenosyl-L-methionine; that span reads RD.

The protein belongs to the methyltransferase superfamily. RsmJ family.

It is found in the cytoplasm. It catalyses the reaction guanosine(1516) in 16S rRNA + S-adenosyl-L-methionine = N(2)-methylguanosine(1516) in 16S rRNA + S-adenosyl-L-homocysteine + H(+). Its function is as follows. Specifically methylates the guanosine in position 1516 of 16S rRNA. The sequence is that of Ribosomal RNA small subunit methyltransferase J from Neisseria meningitidis serogroup B (strain ATCC BAA-335 / MC58).